We begin with the raw amino-acid sequence, 511 residues long: Protein phosphatase 2C 16 (511 aa).

An N-terminal signal peptide occupies residues methionine 1 to serine 22. The PPM-type phosphatase domain occupies leucine 189–leucine 501. Residues aspartate 243, glycine 244, aspartate 432, and aspartate 492 each coordinate Mn(2+).

It belongs to the PP2C family. In terms of assembly, interacts with SWI3B (via N-terminus). Interacts with ABA-bounded PYR1, PYL1, PYL2, PYL3, PYL4, PYL5, PYL6, PYL8 and PYL9, and with free PYL2, PYL3, PYL4, PYL10 and PYL13. It depends on Mg(2+) as a cofactor. Mn(2+) is required as a cofactor. As to expression, expressed in seeds, roots, stems, leaves and flowers, especially in meristematic tissues, guard cells, embryo and siliques.

It is found in the cytoplasm. Its subcellular location is the nucleus. The enzyme catalyses O-phospho-L-seryl-[protein] + H2O = L-seryl-[protein] + phosphate. It catalyses the reaction O-phospho-L-threonyl-[protein] + H2O = L-threonyl-[protein] + phosphate. With respect to regulation, repressed by PYR/PYL/RCAR ABA receptors in an ABA-dependent manner. Functionally, key component and repressor of the abscisic acid (ABA) signaling pathway that regulates numerous ABA responses, such as stomatal closure, seed germination and inhibition of vegetative growth. Confers enhanced sensitivity to drought. This is Protein phosphatase 2C 16 (HAB1) from Arabidopsis thaliana (Mouse-ear cress).